The chain runs to 387 residues: Cysteine desulfurase IscS (387 aa).

Residues 73-74 (AT), asparagine 155, glutamine 183, and 203-205 (SAH) each bind pyridoxal 5'-phosphate. N6-(pyridoxal phosphate)lysine is present on lysine 206. Threonine 241 contacts pyridoxal 5'-phosphate. The active-site Cysteine persulfide intermediate is cysteine 328. [2Fe-2S] cluster is bound at residue cysteine 328.

This sequence belongs to the class-V pyridoxal-phosphate-dependent aminotransferase family. NifS/IscS subfamily. Homodimer. Forms a heterotetramer with IscU, interacts with other sulfur acceptors. Requires pyridoxal 5'-phosphate as cofactor.

It localises to the cytoplasm. It catalyses the reaction (sulfur carrier)-H + L-cysteine = (sulfur carrier)-SH + L-alanine. The protein operates within cofactor biosynthesis; iron-sulfur cluster biosynthesis. Its function is as follows. Master enzyme that delivers sulfur to a number of partners involved in Fe-S cluster assembly, tRNA modification or cofactor biosynthesis. Catalyzes the removal of elemental sulfur atoms from cysteine to produce alanine. Functions as a sulfur delivery protein for Fe-S cluster synthesis onto IscU, an Fe-S scaffold assembly protein, as well as other S acceptor proteins. The protein is Cysteine desulfurase IscS of Helicobacter pylori (strain J99 / ATCC 700824) (Campylobacter pylori J99).